The following is a 208-amino-acid chain: N-(5'-phosphoribosyl)anthranilate isomerase (208 aa).

It belongs to the TrpF family.

It catalyses the reaction N-(5-phospho-beta-D-ribosyl)anthranilate = 1-(2-carboxyphenylamino)-1-deoxy-D-ribulose 5-phosphate. The protein operates within amino-acid biosynthesis; L-tryptophan biosynthesis; L-tryptophan from chorismate: step 3/5. The sequence is that of N-(5'-phosphoribosyl)anthranilate isomerase (trpF) from Pyrobaculum aerophilum (strain ATCC 51768 / DSM 7523 / JCM 9630 / CIP 104966 / NBRC 100827 / IM2).